A 444-amino-acid polypeptide reads, in one-letter code: Cell wall mannoprotein PST1 (444 aa).

The first 19 residues, Met1–Ala19, serve as a signal peptide directing secretion. Residues Asn57, Asn76, Asn83, Asn86, Asn196, Asn210, Asn228, Asn235, Asn242, Asn263, Asn268, Asn280, Asn292, Asn305, and Asn329 are each glycosylated (N-linked (GlcNAc...) asparagine). Composition is skewed to low complexity over residues Ser359–Ser381 and Lys395–Lys417. The tract at residues Ser359–Gly418 is disordered. The GPI-anchor amidated asparagine moiety is linked to residue Asn419. The propeptide at Ala420–Met444 is removed in mature form.

Belongs to the SPS2 family. Extensively N- and O-mannosylated.

The protein localises to the cell membrane. It localises to the secreted. It is found in the cell wall. Its function is as follows. Has a partially redundant function to ECM33 in cell wall integrity. May be involved in a repair mechanism activated in response to cell wall damage. The sequence is that of Cell wall mannoprotein PST1 (PST1) from Saccharomyces cerevisiae (strain YJM789) (Baker's yeast).